Consider the following 64-residue polypeptide: Large ribosomal subunit protein bL32 (64 aa).

Residues 1 to 35 (MAVQKSRVTPSRRGQRRSHDALTAKQLSTDPTSGE) are disordered.

Belongs to the bacterial ribosomal protein bL32 family.

The protein is Large ribosomal subunit protein bL32 of Xanthomonas axonopodis pv. citri (strain 306).